Here is a 109-residue protein sequence, read N- to C-terminus: uncharacterized protein (109 aa).

The helical transmembrane segment at 78 to 98 (YTCIMYIGLLCMFVLLYMTVI) threads the bilayer.

The protein localises to the membrane. This is an uncharacterized protein from Saccharomyces cerevisiae (strain ATCC 204508 / S288c) (Baker's yeast).